A 245-amino-acid chain; its full sequence is 1-(5-phosphoribosyl)-5-[(5-phosphoribosylamino)methylideneamino] imidazole-4-carboxamide isomerase (245 aa).

D11 acts as the Proton acceptor in catalysis. The active-site Proton donor is D132.

Belongs to the HisA/HisF family.

The protein resides in the cytoplasm. The catalysed reaction is 1-(5-phospho-beta-D-ribosyl)-5-[(5-phospho-beta-D-ribosylamino)methylideneamino]imidazole-4-carboxamide = 5-[(5-phospho-1-deoxy-D-ribulos-1-ylimino)methylamino]-1-(5-phospho-beta-D-ribosyl)imidazole-4-carboxamide. It functions in the pathway amino-acid biosynthesis; L-histidine biosynthesis; L-histidine from 5-phospho-alpha-D-ribose 1-diphosphate: step 4/9. The protein is 1-(5-phosphoribosyl)-5-[(5-phosphoribosylamino)methylideneamino] imidazole-4-carboxamide isomerase of Geobacillus thermodenitrificans (strain NG80-2).